A 428-amino-acid polypeptide reads, in one-letter code: C4-dicarboxylate transport protein (428 aa).

9 helical membrane passes run 4–24, 44–64, 76–96, 142–162, 184–204, 222–242, 289–309, 326–346, and 352–372; these read SLFK…ILLG, LIKM…IAGM, VALL…LIIV, IGAF…LFGF, VIFG…FGAM, LIIC…GTIA, VVGL…SIYL, IFHQ…AAGV, and IVLA…LALI.

The protein belongs to the dicarboxylate/amino acid:cation symporter (DAACS) (TC 2.A.23) family.

It is found in the cell inner membrane. Responsible for the transport of dicarboxylates such as succinate, fumarate, and malate from the periplasm across the membrane. The chain is C4-dicarboxylate transport protein from Salmonella gallinarum (strain 287/91 / NCTC 13346).